A 160-amino-acid polypeptide reads, in one-letter code: Ribosome maturation factor RimP (160 aa).

This sequence belongs to the RimP family.

It localises to the cytoplasm. Functionally, required for maturation of 30S ribosomal subunits. In Orientia tsutsugamushi (strain Boryong) (Rickettsia tsutsugamushi), this protein is Ribosome maturation factor RimP.